Consider the following 246-residue polypeptide: Biosynthetic peptidoglycan transglycosylase (246 aa).

The chain crosses the membrane as a helical span at residues 20 to 42 (WLRWLMAAPLLFAAASVLQVLIL).

Belongs to the glycosyltransferase 51 family.

It is found in the cell inner membrane. The enzyme catalyses [GlcNAc-(1-&gt;4)-Mur2Ac(oyl-L-Ala-gamma-D-Glu-L-Lys-D-Ala-D-Ala)](n)-di-trans,octa-cis-undecaprenyl diphosphate + beta-D-GlcNAc-(1-&gt;4)-Mur2Ac(oyl-L-Ala-gamma-D-Glu-L-Lys-D-Ala-D-Ala)-di-trans,octa-cis-undecaprenyl diphosphate = [GlcNAc-(1-&gt;4)-Mur2Ac(oyl-L-Ala-gamma-D-Glu-L-Lys-D-Ala-D-Ala)](n+1)-di-trans,octa-cis-undecaprenyl diphosphate + di-trans,octa-cis-undecaprenyl diphosphate + H(+). The protein operates within cell wall biogenesis; peptidoglycan biosynthesis. Peptidoglycan polymerase that catalyzes glycan chain elongation from lipid-linked precursors. This chain is Biosynthetic peptidoglycan transglycosylase, found in Xanthomonas axonopodis pv. citri (strain 306).